Reading from the N-terminus, the 703-residue chain is Calpain-8 (703 aa).

The Calpain catalytic domain occupies 45 to 344; the sequence is LFKDPEFPAC…FSRLEICNLS (300 aa). Residues Cys-105, His-262, and Asn-286 contribute to the active site. The segment at 355–512 is domain III; that stretch reads KWNLVLFNGR…VFSEKKAQAL (158 aa). The tract at residues 513–531 is linker; that stretch reads EIGDAVPGDPHEPHPRDMD. EF-hand domains lie at 531–566, 575–610, 605–640, and 670–703; these read DGEDEHFWSLSEEFADKDSEISAHQLKRVLNGLLSK, FNINTCREMISLLDGDGTGSLRPVEFKTLWLKICKY, LKICKYLEIYQEMDHSRAGTIDAHEMRTALKKAGFT, and IRLEILFKLFRLLDKDQNGIVQLSLAEWLCRALV. Residues 532 to 703 form a domain IV region; sequence GEDEHFWSLS…LAEWLCRALV (172 aa). Ca(2+)-binding residues include Asp-588, Asp-590, Thr-592, Ser-594, Glu-599, Asp-618, Ser-620, Thr-624, and Glu-629.

This sequence belongs to the peptidase C2 family. In terms of assembly, monomer and homooligomer. Interacts with COPS1/GPS1, COPB1, EYA2, NME2, NME4 and TOMM70. It depends on Ca(2+) as a cofactor. In terms of processing, undergoes autolytic cleavage between Ala-5 and Ala-6 which gives rise to fragments extending from Ala-6 to the C-terminus, Ala-6 to the EF-hand 2 domain and from Ala-6 to the beginning of domain III. Predominantly expressed in the stomach. Localizes strictly to the surface mucus cells in the gastric epithelium and the mucus-secreting goblet cells in the duodenum.

It is found in the cytoplasm. The protein localises to the golgi apparatus. The enzyme catalyses Broad endopeptidase specificity.. With respect to regulation, the concentration of calcium for half-maximal activity is 0.3 mM. Inhibited by calpastatin and calpeptin. Functionally, calcium-regulated non-lysosomal thiol-protease. Involved in membrane trafficking in the gastric surface mucus cells (pit cells) and may involve the membrane trafficking of mucus cells via interactions with coat protein. Proteolytically cleaves the beta-subunit of coatomer complex. The sequence is that of Calpain-8 (Capn8) from Mus musculus (Mouse).